The sequence spans 254 residues: Thiazole synthase (254 aa).

The Schiff-base intermediate with DXP role is filled by Lys95. 1-deoxy-D-xylulose 5-phosphate-binding positions include Gly156, 182-183, and 204-205; these read AG and NT.

It belongs to the ThiG family. In terms of assembly, homotetramer. Forms heterodimers with either ThiH or ThiS.

The protein resides in the cytoplasm. The enzyme catalyses [ThiS sulfur-carrier protein]-C-terminal-Gly-aminoethanethioate + 2-iminoacetate + 1-deoxy-D-xylulose 5-phosphate = [ThiS sulfur-carrier protein]-C-terminal Gly-Gly + 2-[(2R,5Z)-2-carboxy-4-methylthiazol-5(2H)-ylidene]ethyl phosphate + 2 H2O + H(+). It participates in cofactor biosynthesis; thiamine diphosphate biosynthesis. Its function is as follows. Catalyzes the rearrangement of 1-deoxy-D-xylulose 5-phosphate (DXP) to produce the thiazole phosphate moiety of thiamine. Sulfur is provided by the thiocarboxylate moiety of the carrier protein ThiS. In vitro, sulfur can be provided by H(2)S. The sequence is that of Thiazole synthase from Vibrio atlanticus (strain LGP32) (Vibrio splendidus (strain Mel32)).